The primary structure comprises 216 residues: Glycerol-3-phosphate acyltransferase 3 (216 aa).

Helical transmembrane passes span 6–26 (LLLVVIVSYLLGSIPFGYLVS), 58–78 (LVAALDVVKGVSAVAFAGLVI), 92–112 (ILFAQVLAGLAAVAGHIWPVF), 125–145 (FGGMIALCPVAAIFGGEVLII), and 158–178 (ITGVVGAYALLIPLTFISGFP).

This sequence belongs to the PlsY family. In terms of assembly, probably interacts with PlsX.

Its subcellular location is the cell membrane. The enzyme catalyses an acyl phosphate + sn-glycerol 3-phosphate = a 1-acyl-sn-glycero-3-phosphate + phosphate. Its pathway is lipid metabolism; phospholipid metabolism. Catalyzes the transfer of an acyl group from acyl-phosphate (acyl-PO(4)) to glycerol-3-phosphate (G3P) to form lysophosphatidic acid (LPA). This enzyme utilizes acyl-phosphate as fatty acyl donor, but not acyl-CoA or acyl-ACP. The sequence is that of Glycerol-3-phosphate acyltransferase 3 from Dehalococcoides mccartyi (strain ATCC BAA-2266 / KCTC 15142 / 195) (Dehalococcoides ethenogenes (strain 195)).